The sequence spans 341 residues: Heme A synthase (341 aa).

The next 5 membrane-spanning stretches (helical) occupy residues 11–31 (AVSTWLLVVAALVCAMIIIGG), 101–121 (LIGLVYFVPFVFFWMRGHLSA), 127–147 (LFGLFLLGGAQGAIGWWMVAS), 160–180 (LATHLGMAFVILGLSIWFSLE), and 194–214 (AGVTAGLLGLVFVQIILGAFV). Heme is bound at residue H259. 3 helical membrane passes run 261–278 (WTGYLVALGVFAYAWQVW), 288–308 (FMVILPALVIGQIALGIAALL), and 315–335 (LSLAHQAGAILLFIAMVAAAW). H319 contributes to the heme binding site.

The protein belongs to the COX15/CtaA family. Type 2 subfamily. As to quaternary structure, interacts with CtaB. Heme b is required as a cofactor.

The protein localises to the cell membrane. It carries out the reaction Fe(II)-heme o + 2 A + H2O = Fe(II)-heme a + 2 AH2. Its pathway is porphyrin-containing compound metabolism; heme A biosynthesis; heme A from heme O: step 1/1. In terms of biological role, catalyzes the conversion of heme O to heme A by two successive hydroxylations of the methyl group at C8. The first hydroxylation forms heme I, the second hydroxylation results in an unstable dihydroxymethyl group, which spontaneously dehydrates, resulting in the formyl group of heme A. This Maricaulis maris (strain MCS10) (Caulobacter maris) protein is Heme A synthase.